Reading from the N-terminus, the 64-residue chain is Bactridin-2 (64 aa).

An LCN-type CS-alpha/beta domain is found at 1–63 (KDGYLVGNDG…TWNRATNRCG (63 aa)). 4 disulfide bridges follow: cysteine 11-cysteine 62, cysteine 15-cysteine 37, cysteine 23-cysteine 43, and cysteine 27-cysteine 45.

It belongs to the long (4 C-C) scorpion toxin superfamily. Sodium channel inhibitor family. Beta subfamily. In terms of tissue distribution, expressed by the venom gland.

The protein localises to the secreted. Its function is as follows. Shows antibacterial activity against both Gram-positive bacteria (B.subtilis, M.luteus, E.faecalis) and Gram-negative bacteria (P.aeruginosa, Y.enterocolitica, A.calcoaceticus). Modifies membrane sodium permeability on Y.enterocolitica. Is toxic to mice, but is not to crabs. Induces concentration dependent haemolysis in human erythrocytes. Acts by inhibiting the sodium (Nav) currents. This is Bactridin-2 from Tityus discrepans (Venezuelan scorpion).